A 316-amino-acid chain; its full sequence is ATP synthase gamma chain (316 aa).

It belongs to the ATPase gamma chain family. F-type ATPases have 2 components, CF(1) - the catalytic core - and CF(0) - the membrane proton channel. CF(1) has five subunits: alpha(3), beta(3), gamma(1), delta(1), epsilon(1). CF(0) has three main subunits: a, b and c.

The protein localises to the cellular thylakoid membrane. Its function is as follows. Produces ATP from ADP in the presence of a proton gradient across the membrane. The gamma chain is believed to be important in regulating ATPase activity and the flow of protons through the CF(0) complex. The protein is ATP synthase gamma chain of Synechococcus elongatus (strain ATCC 33912 / PCC 7942 / FACHB-805) (Anacystis nidulans R2).